The following is a 115-amino-acid chain: Con-Ins T2 (115 aa).

Positions 1–21 (MTTSFYFLLVALGLLLYVCQS) are cleaved as a signal peptide. Residues 22–29 (SFGNQHTR) constitute a propeptide that is removed on maturation. 3 disulfide bridges follow: C38-C101, C50-C114, and C100-C105. E48 is subject to 4-carboxyglutamate. A propeptide spans 53 to 94 (KRNDAGKKRGQASPLWQRGGSLSMLKARAKRNEAFHLQRAHR) (c peptide). A 4-carboxyglutamate modification is found at E98. E109 is subject to 4-carboxyglutamate. C114 carries the cysteine amide modification.

Belongs to the insulin family. Heterodimer of A and B chains; disulfide-linked. In terms of tissue distribution, expressed by the venom gland.

The protein resides in the secreted. Its function is as follows. This venom insulin facilitates prey capture by rapidly inducing hypoglycemic shock. It is one of the smallest known insulin found in nature and lacks the C-terminal segment of the B chain that, in human insulin, mediates engagement of the insulin receptor (INSR) and assembly of the hormone's hexameric storage form. Despite lacking this segment, it both binds and activates human insulin receptor (long isoform (HIR-B)) with a high potency (EC(50)=15.5 nM). In vivo, intraperitoneal injection of this peptide into zebrafish lowers blood glucose with a lower potency than human insulin. In addition, when applied to water, this peptide reduces overall locomotor activity of zebrafish larvae, observed as a significant decrease in the percentage of time spent swimming and movement frequency. When tested on a mouse model of diabetes, this insulin also lowers blood glucose with a 10-fold lower potency than human insulin. The protein is Con-Ins T2 of Conus tulipa (Fish-hunting cone snail).